We begin with the raw amino-acid sequence, 254 residues long: Hydroxyethylthiazole kinase (254 aa).

Met-40 is a substrate binding site. Residues Arg-116 and Ser-162 each contribute to the ATP site. Gly-189 provides a ligand contact to substrate.

It belongs to the Thz kinase family. Mg(2+) serves as cofactor.

It carries out the reaction 5-(2-hydroxyethyl)-4-methylthiazole + ATP = 4-methyl-5-(2-phosphooxyethyl)-thiazole + ADP + H(+). The protein operates within cofactor biosynthesis; thiamine diphosphate biosynthesis; 4-methyl-5-(2-phosphoethyl)-thiazole from 5-(2-hydroxyethyl)-4-methylthiazole: step 1/1. Its function is as follows. Catalyzes the phosphorylation of the hydroxyl group of 4-methyl-5-beta-hydroxyethylthiazole (THZ). This chain is Hydroxyethylthiazole kinase, found in Limosilactobacillus fermentum (strain NBRC 3956 / LMG 18251) (Lactobacillus fermentum).